The following is a 353-amino-acid chain: MDIAALLSGGVDSSVVVHLLCEQGYKPTLFYIKIGMDGAEYMDCSAEEDIELSTAIARRYGLALEVVDLHREYWDNVAAYAIEKIRKGQTPNPDVMCNKLIKFGCFEQQVGKDFDLTATGHYATTLQLGGKTWLGTAKDPIKDQTDFLAQIDYLQVSKLLFPIGGLMKHEVREIALRAGLPSARRKDSQGICFLGKINYNDFVRRFLGEKEGAVIEFETGKKIGTHRGYWFHTIGQRKGLGLGGGPWFVVKKDIQDNIIYVSHGYDAEQQYGYEFRMKDFNFITDNPWEGSTGEEEVTFKIRHTPEFIKGRLLHDEEGYRIISSEKLQGIAPGQFGVIYDAESRVCFGSGEIG.

ATP is bound at residue 6 to 13 (LLSGGVDS). The segment at 92–94 (NPD) is interaction with target base in tRNA. C97 acts as the Nucleophile in catalysis. C97 and C192 are joined by a disulfide. Position 120 (G120) interacts with ATP. Positions 142 to 144 (KDQ) are interaction with tRNA. The active-site Cysteine persulfide intermediate is the C192.

Belongs to the MnmA/TRMU family.

The protein resides in the cytoplasm. It carries out the reaction S-sulfanyl-L-cysteinyl-[protein] + uridine(34) in tRNA + AH2 + ATP = 2-thiouridine(34) in tRNA + L-cysteinyl-[protein] + A + AMP + diphosphate + H(+). In terms of biological role, catalyzes the 2-thiolation of uridine at the wobble position (U34) of tRNA, leading to the formation of s(2)U34. In Bacteroides fragilis (strain YCH46), this protein is tRNA-specific 2-thiouridylase MnmA 2.